We begin with the raw amino-acid sequence, 467 residues long: MSTQHSGDKLWGGRFSEPTDAFVEAFTASVSFDQRLYRHDIQGSKAHARMLARVGVLTEEECDKIHDGLDAILADIERGDFAWSVELEDVHMNVEARLIERIGDVGKKLHTGRSRNDQVATDIRLYLREAIDALMQEIRRLQGGLVDLAEREAQTIMPGFTHLQTAQPVTFGHHMMAWYEMLERDHGRLADCRKRVNVLPLGAAALAGTPYPLDRHYTAELLGFDAVTDNSLDAVSDRDFAIEFCAAGALIMTHLSRFSEELILWASAQFGFVDLPDRFCTGSSIMPQKKNPDVPELVRGKTGRANGNLIALLTLMKGQPLAYNKDNQEDKEPLFDTVDTLAGSLRAFADMVPHIQVRAEVMRAAASRGFATATDLADYLVRRGMPFRDAHEVVGRAVRHGVETGKDLAEMSLDELRKFSKTIEQDVFEVLTLEGSVAARNVHGGTAPAQVRARIRAARAKLMPAKG.

The protein belongs to the lyase 1 family. Argininosuccinate lyase subfamily.

Its subcellular location is the cytoplasm. The catalysed reaction is 2-(N(omega)-L-arginino)succinate = fumarate + L-arginine. It participates in amino-acid biosynthesis; L-arginine biosynthesis; L-arginine from L-ornithine and carbamoyl phosphate: step 3/3. In Thioalkalivibrio sulfidiphilus (strain HL-EbGR7), this protein is Argininosuccinate lyase.